Here is a 208-residue protein sequence, read N- to C-terminus: Large ribosomal subunit protein uL4 (208 aa).

The interval 45–78 (RQGTAKSKERSEMSGSTRKLGRQKGSGGARRGDI) is disordered.

Belongs to the universal ribosomal protein uL4 family. As to quaternary structure, part of the 50S ribosomal subunit.

One of the primary rRNA binding proteins, this protein initially binds near the 5'-end of the 23S rRNA. It is important during the early stages of 50S assembly. It makes multiple contacts with different domains of the 23S rRNA in the assembled 50S subunit and ribosome. In terms of biological role, forms part of the polypeptide exit tunnel. This is Large ribosomal subunit protein uL4 from Azobacteroides pseudotrichonymphae genomovar. CFP2.